A 283-amino-acid chain; its full sequence is Putative Ig-like domain-containing protein ORF10 (283 aa).

A signal peptide spans 1-55; sequence MIDKRNKKAVTHISTCLCHSSIPIYGDSPFLNTHRAAMDPRPLVLLLLLASHIST. Residues asparagine 75, asparagine 92, asparagine 121, asparagine 157, asparagine 179, asparagine 198, asparagine 223, and asparagine 229 are each glycosylated (N-linked (GlcNAc...) asparagine; by host). Residues 129–227 form the Ig-like domain; it reads QPLGQSIHHA…IDQQTNLTLT (99 aa).

In Galliformes (FAdV-1), this protein is Putative Ig-like domain-containing protein ORF10.